The following is a 119-amino-acid chain: Urease subunit beta (119 aa).

This sequence belongs to the urease beta subunit family. As to quaternary structure, heterotrimer of UreA (gamma), UreB (beta) and UreC (alpha) subunits. Three heterotrimers associate to form the active enzyme.

The protein resides in the cytoplasm. It carries out the reaction urea + 2 H2O + H(+) = hydrogencarbonate + 2 NH4(+). It functions in the pathway nitrogen metabolism; urea degradation; CO(2) and NH(3) from urea (urease route): step 1/1. In Tolumonas auensis (strain DSM 9187 / NBRC 110442 / TA 4), this protein is Urease subunit beta.